Here is a 478-residue protein sequence, read N- to C-terminus: BTB/POZ domain-containing protein 17 (478 aa).

The N-terminal stretch at 1–28 is a signal peptide; sequence MLRKGSCKPGSWGSFWAILALVGLVTRA. N61, N100, N195, and N307 each carry an N-linked (GlcNAc...) asparagine glycan. The 70-residue stretch at 63–132 folds into the BTB domain; that stretch reads SDVILRVQAV…LYCGELTVLL (70 aa). A BACK domain is found at 169-269; sequence AVGWYHYAVS…IPPAQLFQLQ (101 aa).

The protein localises to the secreted. The polypeptide is BTB/POZ domain-containing protein 17 (Btbd17) (Mus musculus (Mouse)).